A 141-amino-acid polypeptide reads, in one-letter code: Hemoglobin subunit alpha-D (141 aa).

Residues 1-141 (MLSADEKQLI…VSDVLAEKYR (141 aa)) form the Globin domain. Heme b contacts are provided by His58 and His87.

Belongs to the globin family. In terms of assembly, heterotetramer of two alpha-D chains and two beta chains. As to expression, red blood cells.

In terms of biological role, involved in oxygen transport from the lung to the various peripheral tissues. The chain is Hemoglobin subunit alpha-D (HBAD) from Phrynops hilarii (Snake-necked turtle).